Consider the following 1343-residue polypeptide: DNA-directed RNA polymerase subunit beta (1343 aa).

It belongs to the RNA polymerase beta chain family. As to quaternary structure, the RNAP catalytic core consists of 2 alpha, 1 beta, 1 beta' and 1 omega subunit. When a sigma factor is associated with the core the holoenzyme is formed, which can initiate transcription.

The catalysed reaction is RNA(n) + a ribonucleoside 5'-triphosphate = RNA(n+1) + diphosphate. DNA-dependent RNA polymerase catalyzes the transcription of DNA into RNA using the four ribonucleoside triphosphates as substrates. This Shewanella sp. (strain W3-18-1) protein is DNA-directed RNA polymerase subunit beta.